The following is a 314-amino-acid chain: 4-hydroxy-3-methylbut-2-enyl diphosphate reductase (314 aa).

Residue cysteine 12 coordinates [4Fe-4S] cluster. (2E)-4-hydroxy-3-methylbut-2-enyl diphosphate contacts are provided by histidine 41 and histidine 74. Dimethylallyl diphosphate is bound by residues histidine 41 and histidine 74. Residues histidine 41 and histidine 74 each coordinate isopentenyl diphosphate. Position 96 (cysteine 96) interacts with [4Fe-4S] cluster. Histidine 124 contacts (2E)-4-hydroxy-3-methylbut-2-enyl diphosphate. Histidine 124 contributes to the dimethylallyl diphosphate binding site. Histidine 124 is a binding site for isopentenyl diphosphate. Glutamate 126 acts as the Proton donor in catalysis. (2E)-4-hydroxy-3-methylbut-2-enyl diphosphate is bound at residue threonine 168. Cysteine 198 serves as a coordination point for [4Fe-4S] cluster. Serine 226, serine 227, asparagine 228, and serine 270 together coordinate (2E)-4-hydroxy-3-methylbut-2-enyl diphosphate. Serine 226, serine 227, asparagine 228, and serine 270 together coordinate dimethylallyl diphosphate. Isopentenyl diphosphate-binding residues include serine 226, serine 227, asparagine 228, and serine 270.

This sequence belongs to the IspH family. It depends on [4Fe-4S] cluster as a cofactor.

It catalyses the reaction isopentenyl diphosphate + 2 oxidized [2Fe-2S]-[ferredoxin] + H2O = (2E)-4-hydroxy-3-methylbut-2-enyl diphosphate + 2 reduced [2Fe-2S]-[ferredoxin] + 2 H(+). The enzyme catalyses dimethylallyl diphosphate + 2 oxidized [2Fe-2S]-[ferredoxin] + H2O = (2E)-4-hydroxy-3-methylbut-2-enyl diphosphate + 2 reduced [2Fe-2S]-[ferredoxin] + 2 H(+). It participates in isoprenoid biosynthesis; dimethylallyl diphosphate biosynthesis; dimethylallyl diphosphate from (2E)-4-hydroxy-3-methylbutenyl diphosphate: step 1/1. Its pathway is isoprenoid biosynthesis; isopentenyl diphosphate biosynthesis via DXP pathway; isopentenyl diphosphate from 1-deoxy-D-xylulose 5-phosphate: step 6/6. Catalyzes the conversion of 1-hydroxy-2-methyl-2-(E)-butenyl 4-diphosphate (HMBPP) into a mixture of isopentenyl diphosphate (IPP) and dimethylallyl diphosphate (DMAPP). Acts in the terminal step of the DOXP/MEP pathway for isoprenoid precursor biosynthesis. The polypeptide is 4-hydroxy-3-methylbut-2-enyl diphosphate reductase (Ectopseudomonas mendocina (strain ymp) (Pseudomonas mendocina)).